A 206-amino-acid polypeptide reads, in one-letter code: Uridine kinase (206 aa).

An ATP-binding site is contributed by 11-18 (GGTGSGKS).

The protein belongs to the uridine kinase family.

It is found in the cytoplasm. It carries out the reaction uridine + ATP = UMP + ADP + H(+). The enzyme catalyses cytidine + ATP = CMP + ADP + H(+). It participates in pyrimidine metabolism; CTP biosynthesis via salvage pathway; CTP from cytidine: step 1/3. The protein operates within pyrimidine metabolism; UMP biosynthesis via salvage pathway; UMP from uridine: step 1/1. In Clostridium botulinum (strain 657 / Type Ba4), this protein is Uridine kinase.